Reading from the N-terminus, the 454-residue chain is Tubulin beta-3 chain (454 aa).

GTP-binding residues include Gln-11, Glu-75, Ser-144, Gly-148, Thr-149, Gly-150, Asn-210, and Asn-232. Residue Glu-75 coordinates Mg(2+). The tract at residues 435–454 (TADDEFDPEVNQEEVEGDCI) is disordered.

This sequence belongs to the tubulin family. As to quaternary structure, dimer of alpha and beta chains. A typical microtubule is a hollow water-filled tube with an outer diameter of 25 nm and an inner diameter of 15 nM. Alpha-beta heterodimers associate head-to-tail to form protofilaments running lengthwise along the microtubule wall with the beta-tubulin subunit facing the microtubule plus end conferring a structural polarity. Microtubules usually have 13 protofilaments but different protofilament numbers can be found in some organisms and specialized cells. The cofactor is Mg(2+).

It is found in the cytoplasm. It localises to the cytoskeleton. Functionally, tubulin is the major constituent of microtubules, a cylinder consisting of laterally associated linear protofilaments composed of alpha- and beta-tubulin heterodimers. Microtubules grow by the addition of GTP-tubulin dimers to the microtubule end, where a stabilizing cap forms. Below the cap, tubulin dimers are in GDP-bound state, owing to GTPase activity of alpha-tubulin. This chain is Tubulin beta-3 chain (betaTub60D), found in Drosophila melanogaster (Fruit fly).